Reading from the N-terminus, the 236-residue chain is MASLDRVKVLVLGDSGVGKSSLVHLLCQNQVLGNPSWTVGCSVDVRVHDYKEGTPEEKTYYIELWDVGGSVGSASSVKSTRAVFYNSVNGIILVHDLTNKKSSQNLYRWSLEALNRDLVPTGVLVTNGDYDREQFADNQIPLLVIGTKLDQIHENKRHEVLTRTAFLAEDFNAEEINLDCTNPRYLAAGSSNAVKLSRFFDKVIEKRYFLRDGNQIPGFPDRKRFGGGTLKSLHYD.

The tract at residues 1-236 (MASLDRVKVL…GGTLKSLHYD (236 aa)) is small GTPase-like. Residues 16-21 (GVGKSS), 148-150 (KLD), and 179-180 (DC) each bind GTP.

The protein belongs to the small GTPase superfamily. Rab family. As to quaternary structure, homodimer. Interacts with GPR89; the interaction stabilizes GPR89. Interacts with RAP1GDS1.

In terms of biological role, required for KRAS signaling regulation and modulation of cell proliferation. Regulator of KRAS prenylation, and probably prenylation of other small GTPases. Required for lymphocyte development and function. Not required for myeloid cell development. The polypeptide is Rab-like protein 3 (RABL3) (Bos taurus (Bovine)).